The primary structure comprises 544 residues: uncharacterized protein (544 aa).

The N-terminal stretch at 1 to 34 is a signal peptide; the sequence is MIARRMLCARPWGPSCVVCALCGALAALVPAVGA. Residues 38–69 are disordered; sequence AVPAPGTPAPPAHTASEAVPPAPEPRAEGEQP.

It belongs to the TP096X family.

This is an uncharacterized protein from Treponema pallidum (strain Nichols).